Here is a 423-residue protein sequence, read N- to C-terminus: Polyglutamylase complex subunit TTLL1 (423 aa).

The 367-residue stretch at 1 to 367 (MAGKVKWVTD…NGEIPDCKWN (367 aa)) folds into the TTL domain. ATP is bound by residues Lys138, 144–145 (QG), 181–184 (SLYI), and 194–196 (KFD). Residue Gln144 coordinates a protein. Residue Arg220 participates in L-glutamate binding. 241-242 (TN) contacts ATP. L-glutamate is bound at residue Lys259. Residues Asp313, Glu326, and Asn328 each contribute to the Mg(2+) site. Lys344 lines the L-glutamate pocket. Residues 391–423 (GAERELRSRPGQSLGPKGSRLRDAGRTVLTTWK) form a disordered region.

Belongs to the tubulin polyglutamylase family. As to quaternary structure, part of the neuronal tubulin polyglutamylase complex which contains TPGS1, TPGS2, TTLL1, LRRC49 and NICN1. Interacts with PCM1, CSTPP1 and LRRC49. It depends on Mg(2+) as a cofactor.

The protein localises to the cytoplasm. It is found in the cytoskeleton. The protein resides in the cilium basal body. It localises to the cilium axoneme. Its subcellular location is the cell projection. The protein localises to the cilium. It is found in the flagellum. The enzyme catalyses (L-glutamyl)(n)-gamma-L-glutamyl-L-glutamyl-[protein] + L-glutamate + ATP = (L-glutamyl)(n+1)-gamma-L-glutamyl-L-glutamyl-[protein] + ADP + phosphate + H(+). Its function is as follows. Catalytic subunit of a polyglutamylase complex which modifies tubulin, generating side chains of glutamate on the gamma-carboxyl group of specific glutamate residues within the C-terminal tail of tubulin. Probably involved in the side-chain elongation step of the polyglutamylation reaction rather than the initiation step. Modifies both alpha- and beta-tubulins with a preference for the alpha-tail. Unlike most polyglutamylases of the tubulin--tyrosine ligase family, only displays a catalytic activity when in complex with other proteins as it is most likely lacking domains important for autonomous activity. Part of the neuronal tubulin polyglutamylase complex. Mediates cilia and flagella polyglutamylation which is essential for their biogenesis and motility. Involved in respiratory motile cilia function through the regulation of beating asymmetry. Essential for sperm flagella biogenesis, motility and male fertility. Involved in KLF4 glutamylation which impedes its ubiquitination, thereby leading to somatic cell reprogramming, pluripotency maintenance and embryogenesis. The polypeptide is Polyglutamylase complex subunit TTLL1 (TTLL1) (Bos taurus (Bovine)).